The chain runs to 200 residues: Mediator of RNA polymerase II transcription subunit 29 (200 aa).

Composition is skewed to low complexity over residues 1-20 and 36-48; these read MAAS…VSGP and AQLV…GLLQ. A disordered region spans residues 1-48; that stretch reads MAASQQQASATTSTASVSGPGSAGGSGPQQQPQPPAQLVGPAQSGLLQ. A2 carries the post-translational modification N-acetylalanine.

It belongs to the Mediator complex subunit 29 family. As to quaternary structure, component of the TRAP/SMCC mediator complex. Interacts with MED20/TRFP. Associates with the MED18-MED20 heteromer.

It is found in the nucleus. In terms of biological role, component of the mediator complex, a complex that can either repress or activate transcription. Mediator complexes are essential for basal and regulated expression of nearly all RNA polymerase II-dependent genes. They may act as a bridge, conveying regulatory information from enhancers and other control elements to the promoter. The sequence is that of Mediator of RNA polymerase II transcription subunit 29 (MED29) from Bos taurus (Bovine).